Reading from the N-terminus, the 248-residue chain is 3-deoxy-manno-octulosonate cytidylyltransferase (248 aa).

It belongs to the KdsB family.

It is found in the cytoplasm. It carries out the reaction 3-deoxy-alpha-D-manno-oct-2-ulosonate + CTP = CMP-3-deoxy-beta-D-manno-octulosonate + diphosphate. It functions in the pathway nucleotide-sugar biosynthesis; CMP-3-deoxy-D-manno-octulosonate biosynthesis; CMP-3-deoxy-D-manno-octulosonate from 3-deoxy-D-manno-octulosonate and CTP: step 1/1. Its pathway is bacterial outer membrane biogenesis; lipopolysaccharide biosynthesis. Functionally, activates KDO (a required 8-carbon sugar) for incorporation into bacterial lipopolysaccharide in Gram-negative bacteria. The protein is 3-deoxy-manno-octulosonate cytidylyltransferase of Chlorobaculum parvum (strain DSM 263 / NCIMB 8327) (Chlorobium vibrioforme subsp. thiosulfatophilum).